The following is a 254-amino-acid chain: Triosephosphate isomerase (254 aa).

12-14 contributes to the substrate binding site; the sequence is NWK. The Electrophile role is filled by H99. E169 functions as the Proton acceptor in the catalytic mechanism. Substrate is bound by residues G175, S214, and 235-236; that span reads GG.

This sequence belongs to the triosephosphate isomerase family. Homodimer.

The protein resides in the cytoplasm. It catalyses the reaction D-glyceraldehyde 3-phosphate = dihydroxyacetone phosphate. It functions in the pathway carbohydrate biosynthesis; gluconeogenesis. The protein operates within carbohydrate degradation; glycolysis; D-glyceraldehyde 3-phosphate from glycerone phosphate: step 1/1. Involved in the gluconeogenesis. Catalyzes stereospecifically the conversion of dihydroxyacetone phosphate (DHAP) to D-glyceraldehyde-3-phosphate (G3P). The polypeptide is Triosephosphate isomerase (Bartonella henselae (strain ATCC 49882 / DSM 28221 / CCUG 30454 / Houston 1) (Rochalimaea henselae)).